A 1099-amino-acid chain; its full sequence is Carbamoyl phosphate synthase large chain (1099 aa).

The segment at 1–402 (MPKREDIKRI…ALGKALRSLE (402 aa)) is carboxyphosphate synthetic domain. Residues arginine 129, arginine 169, glycine 175, glycine 176, glutamate 208, valine 210, glutamate 215, glycine 241, isoleucine 242, histidine 243, glutamine 285, and glutamate 299 each coordinate ATP. Positions 133-328 (KETMEKAGLE…IAKVAALLAV (196 aa)) constitute an ATP-grasp 1 domain. Residues glutamine 285, glutamate 299, and asparagine 301 each contribute to the Mg(2+) site. Mn(2+) is bound by residues glutamine 285, glutamate 299, and asparagine 301. The oligomerization domain stretch occupies residues 403–541 (LDAAPKLDLE…STYNGVENEA (139 aa)). The segment at 542–944 (VPSDREKIMI…AFAKAQIAAG (403 aa)) is carbamoyl phosphate synthetic domain. The region spanning 666–857 (AKLLKQIGLK…VARIAAKIMV (192 aa)) is the ATP-grasp 2 domain. ATP is bound by residues arginine 702, lysine 741, leucine 743, glutamate 748, glycine 773, valine 774, histidine 775, serine 776, glutamine 816, and glutamate 828. 3 residues coordinate Mg(2+): glutamine 816, glutamate 828, and asparagine 830. Mn(2+)-binding residues include glutamine 816, glutamate 828, and asparagine 830. Residues 945–1099 (NPLPTTGAIL…VRRLTDTWKM (155 aa)) form the MGS-like domain. The allosteric domain stretch occupies residues 945–1099 (NPLPTTGAIL…VRRLTDTWKM (155 aa)).

Belongs to the CarB family. In terms of assembly, composed of two chains; the small (or glutamine) chain promotes the hydrolysis of glutamine to ammonia, which is used by the large (or ammonia) chain to synthesize carbamoyl phosphate. Tetramer of heterodimers (alpha,beta)4. It depends on Mg(2+) as a cofactor. Mn(2+) is required as a cofactor.

It catalyses the reaction hydrogencarbonate + L-glutamine + 2 ATP + H2O = carbamoyl phosphate + L-glutamate + 2 ADP + phosphate + 2 H(+). It carries out the reaction hydrogencarbonate + NH4(+) + 2 ATP = carbamoyl phosphate + 2 ADP + phosphate + 2 H(+). It participates in amino-acid biosynthesis; L-arginine biosynthesis; carbamoyl phosphate from bicarbonate: step 1/1. It functions in the pathway pyrimidine metabolism; UMP biosynthesis via de novo pathway; (S)-dihydroorotate from bicarbonate: step 1/3. In terms of biological role, large subunit of the glutamine-dependent carbamoyl phosphate synthetase (CPSase). CPSase catalyzes the formation of carbamoyl phosphate from the ammonia moiety of glutamine, carbonate, and phosphate donated by ATP, constituting the first step of 2 biosynthetic pathways, one leading to arginine and/or urea and the other to pyrimidine nucleotides. The large subunit (synthetase) binds the substrates ammonia (free or transferred from glutamine from the small subunit), hydrogencarbonate and ATP and carries out an ATP-coupled ligase reaction, activating hydrogencarbonate by forming carboxy phosphate which reacts with ammonia to form carbamoyl phosphate. The chain is Carbamoyl phosphate synthase large chain from Thermotoga sp. (strain RQ2).